A 389-amino-acid polypeptide reads, in one-letter code: Putative sugar efflux transporter DR_1322 (389 aa).

12 helical membrane-spanning segments follow: residues 10 to 30 (AVLL…LFAV), 34 to 54 (GMTP…AVLV), 69 to 89 (KPLV…LSGV), 96 to 116 (MATG…VFAF), 135 to 155 (VLRA…AAVL), 161 to 181 (SGVF…LLFI), 211 to 231 (GWVV…MVMF), 246 to 266 (VGFL…LFVL), 281 to 301 (LLLF…PLLI), 308 to 328 (AAVL…LMPG), 341 to 361 (SVVG…VFGY), and 363 to 383 (PVFL…LWAT).

Belongs to the major facilitator superfamily. Set transporter family.

The protein resides in the cell membrane. Its function is as follows. Involved in the efflux of sugars. The physiological role may be the detoxification of non-metabolizable sugar analogs. The chain is Putative sugar efflux transporter DR_1322 from Deinococcus radiodurans (strain ATCC 13939 / DSM 20539 / JCM 16871 / CCUG 27074 / LMG 4051 / NBRC 15346 / NCIMB 9279 / VKM B-1422 / R1).